The primary structure comprises 108 residues: FK506-binding protein 1 (108 aa).

Residues 20-108 (GDNVTIHYVG…KFEVELLKVN (89 aa)) form the PPIase FKBP-type domain.

Belongs to the FKBP-type PPIase family. FKBP1 subfamily.

It localises to the cytoplasm. It catalyses the reaction [protein]-peptidylproline (omega=180) = [protein]-peptidylproline (omega=0). With respect to regulation, inhibited by both FK506 and rapamycin. In terms of biological role, PPIases accelerate the folding of proteins. It catalyzes the cis-trans isomerization of proline imidic peptide bonds in oligopeptides. This chain is FK506-binding protein 1 (FRR1), found in Cryptococcus neoformans var. grubii serotype A (strain H99 / ATCC 208821 / CBS 10515 / FGSC 9487) (Filobasidiella neoformans var. grubii).